A 299-amino-acid chain; its full sequence is MAEVIDGKSVAEDVVRTVKALTAELVAKGKAKPGLAVVIVGEDPASQVYVASKSRTAKECGFHSLQHTLPAETSEEALLKIIADLNADPAVNGILVQLPLPAHIDAGKIIQAIAPQKDVDGFHFINVGKLGTGELDTAFVPCTPAGSMLLIQRVRGKDLSGLNAVVVGRSNIVGKPMANLLLAANCTVTIAHSRTKDLPALARTADILVAAVGRPEMIKGDWVKPGATVIDVGINRIPAPEKGEGKSRLVGDVAYAEAARQAGAITPVPGGVGPMTIAMLMANTLASAYLAAGLKRPTF.

Residues 168–170 (GRS), S193, and I234 each bind NADP(+).

This sequence belongs to the tetrahydrofolate dehydrogenase/cyclohydrolase family. As to quaternary structure, homodimer.

The catalysed reaction is (6R)-5,10-methylene-5,6,7,8-tetrahydrofolate + NADP(+) = (6R)-5,10-methenyltetrahydrofolate + NADPH. The enzyme catalyses (6R)-5,10-methenyltetrahydrofolate + H2O = (6R)-10-formyltetrahydrofolate + H(+). It participates in one-carbon metabolism; tetrahydrofolate interconversion. Functionally, catalyzes the oxidation of 5,10-methylenetetrahydrofolate to 5,10-methenyltetrahydrofolate and then the hydrolysis of 5,10-methenyltetrahydrofolate to 10-formyltetrahydrofolate. The polypeptide is Bifunctional protein FolD 1 (Mesorhizobium japonicum (strain LMG 29417 / CECT 9101 / MAFF 303099) (Mesorhizobium loti (strain MAFF 303099))).